Consider the following 285-residue polypeptide: Gap junction Cx32.2 protein (285 aa).

At 2-19 (GDLGFLSKLLDQVQSHST) the chain is on the cytoplasmic side. Residues 20–40 (VIGKIWMTVLFLFRIMVLGAG) traverse the membrane as a helical segment. The Extracellular portion of the chain corresponds to 41–76 (AESVWGDEQSDFTCNTQQPGCENVCYDWTFPISHIR). The helical transmembrane segment at 77–99 (FWVLQIIFVSTPTLIYLGHAMHI) threads the bilayer. Topologically, residues 100 to 148 (IQQETKLRARLSSPGGSRLCKQPKYTNEQGKVKIKGNLLGSYLTQLVFK) are cytoplasmic. Residues 149–171 (IIIEAAFIVGQYYLYGFIMVPMF) traverse the membrane as a helical segment. Residues 172-194 (PCSKKPCPFTVECYMSRPTEKTI) lie on the Extracellular side of the membrane. The helical transmembrane segment at 195-217 (FIIFMLVVACVSLLLNVIEVFYL) threads the bilayer. At 218 to 285 (ICTRVRCGSR…AKEEKRLLSH (68 aa)) the chain is on the cytoplasmic side. A disordered region spans residues 264-285 (ETSQSIGGSLDGAKEEKRLLSH). Residues 275–285 (GAKEEKRLLSH) are compositionally biased toward basic and acidic residues.

It belongs to the connexin family. Beta-type (group I) subfamily. In terms of assembly, a connexon is composed of a hexamer of connexins.

Its subcellular location is the cell membrane. The protein resides in the cell junction. The protein localises to the gap junction. Its function is as follows. One gap junction consists of a cluster of closely packed pairs of transmembrane channels, the connexons, through which materials of low MW diffuse from one cell to a neighboring cell. May be involved in ovarian follicular maturation. This Micropogonias undulatus (Atlantic croaker) protein is Gap junction Cx32.2 protein.